The chain runs to 442 residues: Radical S-adenosyl methionine domain-containing protein 1, mitochondrial (442 aa).

Residues 1-17 (MVPSGVRTGRWVAAARA) constitute a mitochondrion transit peptide. Residues 34–270 (ESASTRAALY…RTVLRDAGFR (237 aa)) form the Radical SAM core domain. Tyr43 contributes to the S-adenosyl-L-methionine binding site. Residues Cys49, Cys53, and Cys56 each coordinate [4Fe-4S] cluster. S-adenosyl-L-methionine is bound by residues Gly98, 99 to 100 (GT), Glu131, Gln158, Arg170, and Asp195.

The protein belongs to the anaerobic coproporphyrinogen-III oxidase family. HemW subfamily. [4Fe-4S] cluster serves as cofactor.

It is found in the mitochondrion. Its function is as follows. May be a heme chaperone, appears to bind heme. Homologous bacterial proteins do not have oxygen-independent coproporphyrinogen-III oxidase activity. Binds 1 [4Fe-4S] cluster. The cluster is coordinated with 3 cysteines and an exchangeable S-adenosyl-L-methionine. In Mus musculus (Mouse), this protein is Radical S-adenosyl methionine domain-containing protein 1, mitochondrial (Rsad1).